The following is a 173-amino-acid chain: Small ribosomal subunit protein uS7 (173 aa).

The protein belongs to the universal ribosomal protein uS7 family. In terms of assembly, part of the 30S ribosomal subunit. Contacts proteins S9 and S11.

Functionally, one of the primary rRNA binding proteins, it binds directly to 16S rRNA where it nucleates assembly of the head domain of the 30S subunit. Is located at the subunit interface close to the decoding center, probably blocks exit of the E-site tRNA. The polypeptide is Small ribosomal subunit protein uS7 (Orientia tsutsugamushi (strain Ikeda) (Rickettsia tsutsugamushi)).